A 768-amino-acid polypeptide reads, in one-letter code: Ral guanine nucleotide dissociation stimulator-like 1 (768 aa).

An N-terminal Ras-GEF domain is found at 65–196 (KIRTIKAGTL…RAQNLLEQFQ (132 aa)). Residues 232–501 (SEDLVAEQLT…YALSCEIEAA (270 aa)) form the Ras-GEF domain. At Ser520 the chain carries Phosphoserine. The tract at residues 528-623 (MITSPTPTKE…PPSCNNNPKI (96 aa)) is disordered. Low complexity-rich tracts occupy residues 541–561 (STAS…SCES), 586–596 (ESSSSCSSIHS), and 605–621 (SSLI…NNNP). One can recognise a Ras-associating domain in the interval 648 to 735 (DTCIIRISVE…FDFILRKKNS (88 aa)).

As to quaternary structure, interacts with Ras. Expressed in a wide variety of tissues with strong expression being seen in the heart, brain, kidney, spleen and testis.

In terms of biological role, probable guanine nucleotide exchange factor. The chain is Ral guanine nucleotide dissociation stimulator-like 1 (RGL1) from Homo sapiens (Human).